Here is a 265-residue protein sequence, read N- to C-terminus: U6 snRNA phosphodiesterase 1 (265 aa).

The disordered stretch occupies residues 1 to 22 (MSLVCYESSSSGEDDDETISDN). The Proton acceptor role is filled by H109. AMP is bound by residues 109-111 (HLS) and 195-201 (DFLLHIS). 197–201 (LLHIS) is a UMP binding site. The Proton donor role is filled by H199.

The protein belongs to the 2H phosphoesterase superfamily. USB1 family.

The protein resides in the nucleus. It carries out the reaction a 3'-end uridylyl-uridine-RNA = a 3'-end 2',3'-cyclophospho-uridine-RNA + uridine. 3'-5' RNA exonuclease that trims the 3' end of oligo(U) tracts of the pre-U6 small nuclear RNA (snRNA) molecule, leading to the formation of a U6 snRNA 3' end-terminated with a 2',3'-cyclic phosphate.d. Participates in the U6 snRNA 3' end processing that prevents U6 snRNA degradation. This chain is U6 snRNA phosphodiesterase 1, found in Schizosaccharomyces pombe (strain 972 / ATCC 24843) (Fission yeast).